The following is a 493-amino-acid chain: Glutamyl-tRNA(Gln) amidotransferase subunit A (493 aa).

Catalysis depends on charge relay system residues Lys-78 and Ser-158. Ser-182 acts as the Acyl-ester intermediate in catalysis.

This sequence belongs to the amidase family. GatA subfamily. Heterotrimer of A, B and C subunits.

The enzyme catalyses L-glutamyl-tRNA(Gln) + L-glutamine + ATP + H2O = L-glutaminyl-tRNA(Gln) + L-glutamate + ADP + phosphate + H(+). Functionally, allows the formation of correctly charged Gln-tRNA(Gln) through the transamidation of misacylated Glu-tRNA(Gln) in organisms which lack glutaminyl-tRNA synthetase. The reaction takes place in the presence of glutamine and ATP through an activated gamma-phospho-Glu-tRNA(Gln). This Rickettsia rickettsii (strain Iowa) protein is Glutamyl-tRNA(Gln) amidotransferase subunit A.